Reading from the N-terminus, the 127-residue chain is Large ribosomal subunit protein bL17 (127 aa).

The protein belongs to the bacterial ribosomal protein bL17 family. Part of the 50S ribosomal subunit. Contacts protein L32.

This is Large ribosomal subunit protein bL17 from Legionella pneumophila (strain Corby).